A 205-amino-acid chain; its full sequence is Thymidylate kinase (205 aa).

Residue 11–18 coordinates ATP; sequence GLDKSGKT.

The protein belongs to the thymidylate kinase family. As to quaternary structure, homodimer; the dimer arrangement is orthogonal and not antiparallel as in human enzyme.

It catalyses the reaction dTMP + ATP = dTDP + ADP. It functions in the pathway pyrimidine metabolism; dTTP biosynthesis. Poxvirus TMP kinase is able to phosphorylate dTMP, dUMP and also dGMP from any purine and pyrimidine nucleoside triphosphate. The large substrate specificity is explained by the presence of a canal connecting the edge of the dimer interface to the TMP base binding pocket, canal not found in the human homolog. In Homo sapiens (Human), this protein is Thymidylate kinase (OPG178).